Consider the following 554-residue polypeptide: Glutamine--tRNA ligase (554 aa).

The 'HIGH' region signature appears at 33–43 (PEPNGYLHIGH). ATP-binding positions include 34 to 36 (EPN) and 40 to 46 (HIGHAKS). L-glutamine is bound by residues Asp-66 and Tyr-210. ATP is bound by residues Thr-229, 259–260 (RL), and 267–269 (MSK). A 'KMSKS' region motif is present at residues 266–270 (VMSKR).

It belongs to the class-I aminoacyl-tRNA synthetase family. As to quaternary structure, monomer.

The protein localises to the cytoplasm. The catalysed reaction is tRNA(Gln) + L-glutamine + ATP = L-glutaminyl-tRNA(Gln) + AMP + diphosphate. In Clostridioides difficile (strain 630) (Peptoclostridium difficile), this protein is Glutamine--tRNA ligase.